The sequence spans 317 residues: Porphobilinogen deaminase (317 aa).

Cys245 is modified (S-(dipyrrolylmethanemethyl)cysteine).

The protein belongs to the HMBS family. As to quaternary structure, monomer. Dipyrromethane serves as cofactor.

The enzyme catalyses 4 porphobilinogen + H2O = hydroxymethylbilane + 4 NH4(+). Its pathway is porphyrin-containing compound metabolism; protoporphyrin-IX biosynthesis; coproporphyrinogen-III from 5-aminolevulinate: step 2/4. It functions in the pathway porphyrin-containing compound metabolism; chlorophyll biosynthesis. Tetrapolymerization of the monopyrrole PBG into the hydroxymethylbilane pre-uroporphyrinogen in several discrete steps. The protein is Porphobilinogen deaminase of Prochlorococcus marinus (strain MIT 9313).